The primary structure comprises 264 residues: Phosphonoacetaldehyde hydrolase (264 aa).

Asp9 acts as the Nucleophile in catalysis. Mg(2+)-binding residues include Asp9 and Ala11. Lys50 (schiff-base intermediate with substrate) is an active-site residue. A Mg(2+)-binding site is contributed by Asp183.

This sequence belongs to the HAD-like hydrolase superfamily. PhnX family. Homodimer. Requires Mg(2+) as cofactor.

It catalyses the reaction phosphonoacetaldehyde + H2O = acetaldehyde + phosphate + H(+). In terms of biological role, involved in phosphonate degradation. The polypeptide is Phosphonoacetaldehyde hydrolase (Bacillus mycoides (strain KBAB4) (Bacillus weihenstephanensis)).